Consider the following 121-residue polypeptide: Large ribosomal subunit protein uL3 (121 aa).

Position 62 is an N5-methylglutamine (Gln-62).

It belongs to the universal ribosomal protein uL3 family. In terms of assembly, part of the 50S ribosomal subunit. Forms a cluster with proteins L14 and L19. Post-translationally, methylated by PrmB.

In terms of biological role, one of the primary rRNA binding proteins, it binds directly near the 3'-end of the 23S rRNA, where it nucleates assembly of the 50S subunit. This is Large ribosomal subunit protein uL3 (rplC) from Aggregatibacter actinomycetemcomitans (Actinobacillus actinomycetemcomitans).